The chain runs to 381 residues: RxLR effector protein 54 (381 aa).

The first 19 residues, 1–19 (MRFQSIMMLTITCAGTCLA), serve as a signal peptide directing secretion. The RxLR-dEER motif lies at 57–75 (RFLRFDTVARDTAGNDEER). WY-domain stretches follow at residues 97 to 150 (SAEE…ANNG), 151 to 198 (NQAF…SLSG), 199 to 247 (NWIR…WNKN), 251 to 299 (FFGD…LLTS), and 302 to 354 (SHKT…RDKI). The short motif at 372 to 381 (KPLDFDWEIV) is the ATG8 interacting motif element.

It belongs to the RxLR effector family. As to quaternary structure, interacts via its C-terminal AIM with host ATG8CL.

It is found in the secreted. The protein localises to the host nucleus. It localises to the host cytoplasm. Its function is as follows. Effector that specifically binds host autophagy protein ATG8CL of the ATG8 family to stimulate autophagosome formation and subsequent autophagy rather than blocking autophagic flux. The pathogen remodels host-microbe interface by co-opting the host autophagy machinery which plays a key role in plant immunity. PexRD54 competes with the autophagy cargo receptor Joka2 to deplete it out of ATG8CL complexes and interferes with Joka2's positive effect on pathogen defense. The polypeptide is RxLR effector protein 54 (Phytophthora infestans (strain T30-4) (Potato late blight agent)).